A 221-amino-acid polypeptide reads, in one-letter code: Prolactin-3B1 (221 aa).

The N-terminal stretch at 1–30 (MQLPLTPLSFSGTLLLMAMSNFLLWEHVTS) is a signal peptide. 2 cysteine pairs are disulfide-bonded: Cys-81/Cys-196 and Cys-213/Cys-221.

It belongs to the somatotropin/prolactin family.

The protein localises to the secreted. This chain is Prolactin-3B1 (PRL3B1), found in Mesocricetus auratus (Golden hamster).